We begin with the raw amino-acid sequence, 339 residues long: GTPase Obg (339 aa).

The Obg domain occupies 1-159 (MKFVDEAFVR…RELKLELKLL (159 aa)). The OBG-type G domain occupies 160–333 (ADVGLLGLPN…LCYDLMSFLE (174 aa)). Residues 166-173 (GLPNAGKS), 191-195 (FTTLY), 213-216 (DIPG), 283-286 (NKID), and 314-316 (SAI) each bind GTP. Positions 173 and 193 each coordinate Mg(2+).

This sequence belongs to the TRAFAC class OBG-HflX-like GTPase superfamily. OBG GTPase family. In terms of assembly, monomer. Mg(2+) is required as a cofactor.

It is found in the cytoplasm. An essential GTPase which binds GTP, GDP and possibly (p)ppGpp with moderate affinity, with high nucleotide exchange rates and a fairly low GTP hydrolysis rate. Plays a role in control of the cell cycle, stress response, ribosome biogenesis and in those bacteria that undergo differentiation, in morphogenesis control. This chain is GTPase Obg, found in Coxiella burnetii (strain RSA 331 / Henzerling II).